Consider the following 782-residue polypeptide: E3 UFM1-protein ligase 1 homolog (782 aa).

The interval 405–478 (VSTQELEDDG…TRGGGGASKK (74 aa)) is disordered.

The protein belongs to the UFL1 family.

In terms of biological role, E3 UFM1-protein ligase that mediates ufmylation of target proteins. The chain is E3 UFM1-protein ligase 1 homolog from Drosophila simulans (Fruit fly).